A 180-amino-acid chain; its full sequence is Small ribosomal subunit protein bS16 (180 aa).

The protein belongs to the bacterial ribosomal protein bS16 family.

In Flavobacterium psychrophilum (strain ATCC 49511 / DSM 21280 / CIP 103535 / JIP02/86), this protein is Small ribosomal subunit protein bS16.